An 84-amino-acid chain; its full sequence is Acyl carrier protein homolog (84 aa).

Residues 4 to 79 enclose the Carrier domain; that stretch reads HEILLKIKEI…DLVLEVKNLL (76 aa). Ser39 carries the O-(pantetheine 4'-phosphoryl)serine modification.

4'-phosphopantetheine is transferred from CoA to a specific serine of the apo-ACP-like protein.

It participates in lipid metabolism; fatty acid biosynthesis. Its function is as follows. Carrier of the growing fatty acid chain in fatty acid biosynthesis. This chain is Acyl carrier protein homolog, found in Mycoplasma genitalium (strain ATCC 33530 / DSM 19775 / NCTC 10195 / G37) (Mycoplasmoides genitalium).